The following is a 332-amino-acid chain: L-lactate dehydrogenase A chain (332 aa).

Residues 29–57 (GMVG…MEDK) and R99 each bind NAD(+). Substrate-binding residues include R106, N138, and R169. N138 provides a ligand contact to NAD(+). Residue H193 is the Proton acceptor of the active site. T248 is a substrate binding site.

It belongs to the LDH/MDH superfamily. LDH family. In terms of assembly, homotetramer.

Its subcellular location is the cytoplasm. It carries out the reaction (S)-lactate + NAD(+) = pyruvate + NADH + H(+). It participates in fermentation; pyruvate fermentation to lactate; (S)-lactate from pyruvate: step 1/1. Interconverts simultaneously and stereospecifically pyruvate and lactate with concomitant interconversion of NADH and NAD(+). The chain is L-lactate dehydrogenase A chain (ldha) from Fundulus heteroclitus (Killifish).